The chain runs to 518 residues: Calcium-dependent protein kinase 1 (518 aa).

Positions 1–10 (MGNRTSRHHR) are enriched in basic residues. Residues 1-49 (MGNRTSRHHRAAPEQPPPQPKPKPQPQQQQQQWPRPQQPTPPPAAAPDA) are disordered. Gly-2 carries N-myristoyl glycine lipidation. Residues 14–25 (EQPPPQPKPKPQ) show a composition bias toward pro residues. Residues 26–35 (PQQQQQQWPR) show a composition bias toward low complexity. Over residues 36–45 (PQQPTPPPAA) the composition is skewed to pro residues. The Protein kinase domain occupies 66–324 (YTFGRELGRG…SAEILNHPWI (259 aa)). ATP-binding positions include 72–80 (LGRGQFGVT) and Lys-95. Residue Asp-190 is the Proton acceptor of the active site. Residues 330–360 (APDKPLDITVISRMKQFRAMNKLKKVALKVV) form an autoinhibitory domain region. 4 EF-hand domains span residues 367 to 402 (EEIT…LGTK), 403 to 438 (ISES…MNRL), 439 to 474 (EKED…YDMG), and 475 to 509 (DDKT…NNPE). The Ca(2+) site is built by Asp-380, Asp-382, Ser-384, Thr-386, Glu-391, Asp-416, Asp-418, Asn-420, Thr-422, Glu-427, Asp-452, Asp-454, Ser-456, Tyr-458, Glu-463, Asp-487, Asp-489, Asp-491, Arg-493, and Glu-498.

The protein belongs to the protein kinase superfamily. Ser/Thr protein kinase family. CDPK subfamily. In terms of tissue distribution, expressed in roots and leaf blades.

The protein localises to the membrane. The catalysed reaction is L-seryl-[protein] + ATP = O-phospho-L-seryl-[protein] + ADP + H(+). The enzyme catalyses L-threonyl-[protein] + ATP = O-phospho-L-threonyl-[protein] + ADP + H(+). With respect to regulation, activated by calcium. Autophosphorylation may play an important role in the regulation of the kinase activity. Its function is as follows. May play a role in signal transduction pathways that involve calcium as a second messenger. This chain is Calcium-dependent protein kinase 1, found in Oryza sativa subsp. japonica (Rice).